Reading from the N-terminus, the 436-residue chain is Xaa-Arg dipeptidase (436 aa).

Belongs to the peptidase M20A family.

The enzyme catalyses beta-alanyl-L-lysine + H2O = beta-alanine + L-lysine. It carries out the reaction beta-alanyl-L-ornithine + H2O = beta-alanine + L-ornithine. It catalyses the reaction N(2)-(4-aminobutanoyl)-L-lysine + H2O = 4-aminobutanoate + L-lysine. The catalysed reaction is N(2)-(4-aminobutanoyl)-L-ornithine + H2O = 4-aminobutanoate + L-ornithine. The enzyme catalyses N(2)-(4-aminobutanoyl)-L-arginine + H2O = 4-aminobutanoate + L-arginine. Its function is as follows. Catalyzes the peptide bond hydrolysis in dipeptides having basic amino acids lysine, ornithine or arginine at C-terminus. Postulated to function in a metabolite repair mechanism by eliminating alternate dipeptide by-products formed during carnosine synthesis. This Homo sapiens (Human) protein is Xaa-Arg dipeptidase.